A 337-amino-acid chain; its full sequence is Probable E3 ubiquitin-protein ligase LUL1 (337 aa).

Gly2 is lipidated: N-myristoyl glycine. Positions 139–255 (FTFDASMPGR…GEIKIEVVKQ (117 aa)) are DAR2 domain. An RING-type; atypical zinc finger spans residues 285-324 (CVVCLSEPRDTTVLPCRHMCMCSGCAKALRFQTNLCPVCR).

The protein belongs to the RING-type zinc finger family. LOG2 subfamily. In terms of processing, myristoylated (in vitro).

The enzyme catalyses S-ubiquitinyl-[E2 ubiquitin-conjugating enzyme]-L-cysteine + [acceptor protein]-L-lysine = [E2 ubiquitin-conjugating enzyme]-L-cysteine + N(6)-ubiquitinyl-[acceptor protein]-L-lysine.. It participates in protein modification; protein ubiquitination. Functionally, acts as an E3 ubiquitin-protein ligase, or as part of E3 complex, which accepts ubiquitin from specific E2 ubiquitin-conjugating enzymes and then transfers it to substrates (in vitro). This is Probable E3 ubiquitin-protein ligase LUL1 (LUL1) from Arabidopsis thaliana (Mouse-ear cress).